The chain runs to 312 residues: Homoserine kinase (312 aa).

Pro-94 to Ala-104 is a binding site for ATP.

It belongs to the GHMP kinase family. Homoserine kinase subfamily.

It localises to the cytoplasm. It catalyses the reaction L-homoserine + ATP = O-phospho-L-homoserine + ADP + H(+). It functions in the pathway amino-acid biosynthesis; L-threonine biosynthesis; L-threonine from L-aspartate: step 4/5. Catalyzes the ATP-dependent phosphorylation of L-homoserine to L-homoserine phosphate. The polypeptide is Homoserine kinase (Caldanaerobacter subterraneus subsp. tengcongensis (strain DSM 15242 / JCM 11007 / NBRC 100824 / MB4) (Thermoanaerobacter tengcongensis)).